The chain runs to 122 residues: Basic phospholipase A2 LmTX-I (122 aa).

Disulfide bonds link cysteine 26/cysteine 115, cysteine 28/cysteine 44, cysteine 43/cysteine 95, cysteine 49/cysteine 122, cysteine 50/cysteine 88, and cysteine 75/cysteine 86. Positions 27, 29, and 31 each coordinate Ca(2+). The active site involves histidine 47. Residue aspartate 48 coordinates Ca(2+). Aspartate 89 is an active-site residue.

In terms of assembly, monomer. Ca(2+) serves as cofactor. Expressed by the venom gland.

It is found in the secreted. It catalyses the reaction a 1,2-diacyl-sn-glycero-3-phosphocholine + H2O = a 1-acyl-sn-glycero-3-phosphocholine + a fatty acid + H(+). Its activity is regulated as follows. Inhibited by Mn(2+), Mg(2+), Zn(2+) and Cu(2+). In terms of biological role, snake venom phospholipase A2 (PLA2) that displays neurotoxic and myotoxic activities. Induces inflammatory edema by mechanisms involving mast cell activation and arachidonic acid metabolites. Increases plasma creatine kinase activity. PLA2 catalyzes the calcium-dependent hydrolysis of the 2-acyl groups in 3-sn-phosphoglycerides. In Lachesis muta muta (Bushmaster), this protein is Basic phospholipase A2 LmTX-I.